The sequence spans 125 residues: Secreted RxLR effector protein 22 (125 aa).

Positions 1–26 are cleaved as a signal peptide; it reads MRLIYSALVTAAAMVAISNGSTPARG. The segment at 21–66 is disordered; sequence STPARGNEVETRSLRGGNEVDSSMSDDGERAARGGGRVRSQASGVT. Residues 32–50 carry the RxLR-dEER motif; it reads RSLRGGNEVDSSMSDDGER.

The protein belongs to the RxLR effector family.

It localises to the secreted. The protein resides in the host nucleus. In terms of biological role, effector that acts as a broad suppressor of cell death to interrupt plant immunity. Inhibits cell death induced by cell death-inducing proteins, including the PAMP elicitor INF1 from P.infestans. The chain is Secreted RxLR effector protein 22 from Plasmopara viticola (Downy mildew of grapevine).